We begin with the raw amino-acid sequence, 1251 residues long: Botulinum neurotoxin type E (1251 aa).

His212 is a binding site for Zn(2+). Glu213 is a catalytic residue. Residues His216 and Glu251 each coordinate Zn(2+). An intrachain disulfide couples Cys412 to Cys426. The tract at residues 423–819 is translocation domain (TD); sequence KSICIEINNG…ELNSMVIDTL (397 aa). A belt region spans residues 466–515; sequence NDLDQVILNFNSESAPGLSDEKLNLTIQNDAYIPKYDSNGTSDIEQHDVN. The tract at residues 845–1067 is N-terminus of receptor binding domain (N-RBD); sequence KRIKSSSVLN…EIQTLYNNEP (223 aa). Positions 1068–1251 are C-terminus of receptor binding domain (C-RBD); sequence NANILKDFWG…ISEEHGWQEK (184 aa). The short motif at 1221–1224 is the Host ganglioside-binding motif element; it reads STWY.

The protein belongs to the peptidase M27 family. As to quaternary structure, heterodimer; disulfide-linked heterodimer of a light chain (LC) and a heavy chain (HC). The LC has the proteolytic/pharmacological activity, while the N- and C-terminal of the HC mediate channel formation and toxin binding, respectively. Interacts with host synaptic vesicle glycoproteins SV2A and SV2B which probably serve as coreceptors. The cofactor is Zn(2+).

The protein localises to the secreted. It localises to the host cytoplasm. It is found in the host cytosol. Its subcellular location is the host synapse. The protein resides in the host presynaptic cell membrane. The protein localises to the host cytoplasmic vesicle. It localises to the host secretory vesicle. It is found in the host synaptic vesicle membrane. It catalyses the reaction Limited hydrolysis of proteins of the neuroexocytosis apparatus, synaptobrevins, SNAP25 or syntaxin. No detected action on small molecule substrates.. Botulinum toxin causes flaccid paralysis by inhibiting neurotransmitter (acetylcholine) release from the presynaptic membranes of nerve terminals of eukaryotic host skeletal and autonomic nervous system, with frequent heart or respiratory failure. Precursor of botulinum neurotoxin E which has 2 coreceptors; complex polysialylated gangliosides found on neural tissue and specific membrane-anchored proteins found in synaptic vesicles. Receptor proteins are exposed on host presynaptic cell membrane during neurotransmitter release, when the toxin heavy chain (HC) binds to them. Upon synaptic vesicle recycling the toxin is taken up via the endocytic pathway. When the pH of the toxin-containing endosome drops a structural rearrangement occurs so that the N-terminus of the HC forms pores that allows the light chain (LC) to translocate into the cytosol. Once in the cytosol the disulfide bond linking the 2 subunits is reduced and LC cleaves its target protein on synaptic vesicles, preventing their fusion with the cytoplasmic membrane and thus neurotransmitter release. In terms of biological role, has proteolytic activity. After translocation into the eukaryotic host cytosol, LC hydrolyzes the '180-Arg-|-Ile-181' bond in SNAP25, blocking neurotransmitter release. Its function is as follows. Responsible for host epithelial cell transcytosis, host nerve cell targeting and translocation of light chain (LC) into host cytosol. Composed of 3 subdomains; the translocation domain (TD), and N-terminus and C-terminus of the receptor-binding domain (RBD). The RBD is responsible for the adherence of the toxin to the cell surface. It simultaneously recognizes 2 coreceptors; host polysialated gangliosides and the receptor proteins SV2A and SV2B in close proximity on host synaptic vesicles. Interaction with SV2 proteins requires SV2 glycosylation. The N-terminus of the TD wraps an extended belt around the perimeter of the LC, protecting Zn(2+) in the active site; it may also prevent premature LC dissociation from the translocation channel and protect toxin prior to translocation. The TD inserts into synaptic vesicle membrane to allow translocation into the host cytosol. Binds ganglioside GD1a in vitro. This chain is Botulinum neurotoxin type E, found in Clostridium butyricum.